The sequence spans 562 residues: MVKIVTVKTQAYPDQKPGTSGLRKRVKVFQSSANYAENFIQSIISTVEPAQRQEATLVVGGDGRFYMKEAIQLIARIAAANGIGRLVIGQNGILSTPAVSCIIRKIKAIGGIILTASHNPGGPNGDFGIKFNISNGGPAPEAITDKIFQISKTIEEYAICPDLKVDLGVLGKQQFDLENKFEPFTVEIVDSVEAYATMLRNIFDFSALKELLSGPNRLKIRIDAMHGVVGPYVKKILCEELGAPANSAVNCVPLEDFGGHHPDPNLTYAADLVETMKSGEHDFGAAFDGDGDRNMILGKHGFFVNPSDSVAVIAANIFSIPYFQQTGVRGFARSMPTSGALDRVANATKIALYETPTGWKFFGNLMDASKLSLCGEESFGTGSDHIREKDGLWAVLAWLSILATRKQSVEDILKDHWQKYGRNFFTRYDYEEVEAEGANKMMKDLEALMFDRSFVGKQFSANDKVYTVEKADNFEYSDPVDGSISRNQGLRLIFTDGSRIIFRLSGTGSAGATIRLYIDSYEKDVAKINQDPQVMLAPLISIALKVSQLQERTGRSAPTVIT.

At methionine 1 the chain carries N-acetylmethionine. An N6-acetyllysine modification is found at lysine 16. Alpha-D-glucose 1,6-bisphosphate is bound at residue arginine 23. Threonine 115 is modified (phosphothreonine). Serine 117 lines the alpha-D-glucose 1,6-bisphosphate pocket. The Phosphoserine intermediate role is filled by serine 117. Residue serine 117 participates in Mg(2+) binding. 2 positions are modified to phosphoserine: serine 117 and serine 134. Threonine 185 carries the phosphothreonine modification. Phosphoserine occurs at positions 206 and 213. Mg(2+) is bound by residues aspartate 288, aspartate 290, and aspartate 292. The alpha-D-glucose 1,6-bisphosphate site is built by aspartate 292 and arginine 293. Lysine 349 carries the N6-acetyllysine modification. A Phosphotyrosine modification is found at tyrosine 353. Threonine 357 provides a ligand contact to alpha-D-glucose 1,6-bisphosphate. Serine 369 carries the post-translational modification Phosphoserine. Residues glutamate 376, serine 378, and lysine 389 each coordinate alpha-D-glucose 1,6-bisphosphate. At serine 378 the chain carries Phosphoserine. At lysine 419 the chain carries N6-succinyllysine. Position 467 is a phosphothreonine; by PAK1 (threonine 467). Serine 477, serine 485, and serine 505 each carry phosphoserine. A Phosphothreonine modification is found at threonine 507. Serine 509 and serine 541 each carry phosphoserine.

The protein belongs to the phosphohexose mutase family. In terms of assembly, monomer. Requires Mg(2+) as cofactor. In terms of processing, phosphorylation at Thr-467 by PAK1 significantly enhances enzymatic activity.

The protein resides in the cytoplasm. It carries out the reaction alpha-D-glucose 1-phosphate = alpha-D-glucose 6-phosphate. It catalyses the reaction O-phospho-L-seryl-[protein] + alpha-D-glucose 1-phosphate = alpha-D-glucose 1,6-bisphosphate + L-seryl-[protein]. The enzyme catalyses alpha-D-glucose 1,6-bisphosphate + L-seryl-[protein] = O-phospho-L-seryl-[protein] + alpha-D-glucose 6-phosphate. Catalyzes the reversible isomerization of alpha-D-glucose 1-phosphate to alpha-D-glucose 6-phosphate. The mechanism proceeds via the intermediate compound alpha-D-glucose 1,6-bisphosphate. This enzyme participates in both the breakdown and synthesis of glucose. The protein is Phosphoglucomutase-1 (PGM1) of Macaca fascicularis (Crab-eating macaque).